The primary structure comprises 962 residues: Protein kinase ORF73 (962 aa).

Disordered stretches follow at residues Met1 to Pro28 and Ser62 to Thr152. Acidic residues predominate over residues Asp81–Asn90. The segment covering Tyr143–Thr152 has biased composition (polar residues). One can recognise a Protein kinase domain in the interval Leu301–Tyr595. Residues Leu307–Val315 and Lys324 contribute to the ATP site. Asp434 serves as the catalytic Proton acceptor.

The protein belongs to the protein kinase superfamily. Ser/Thr protein kinase family.

It carries out the reaction L-seryl-[protein] + ATP = O-phospho-L-seryl-[protein] + ADP + H(+). It catalyses the reaction L-threonyl-[protein] + ATP = O-phospho-L-threonyl-[protein] + ADP + H(+). This chain is Protein kinase ORF73 (ORF73), found in Ictaluridae (bullhead catfishes).